A 1448-amino-acid chain; its full sequence is Murinoglobulin-2 (1448 aa).

An N-terminal signal peptide occupies residues 1–24 (MWKNREAQLCLFSVLLAFLPSASL). 3 disulfide bridges follow: Cys48/Cys86, Cys245/Cys277, and Cys263/Cys289. Residue Asn55 is glycosylated (N-linked (GlcNAc...) asparagine). N-linked (GlcNAc...) asparagine glycans are attached at residues Asn295, Asn315, Asn387, and Asn502. Cystine bridges form between Cys462–Cys556, Cys588–Cys748, and Cys636–Cys681. A bait region region spans residues 678-709 (PTYCYDLPKEPPRKDPPRKDPEPKDTVVETIR). 2 N-linked (GlcNAc...) asparagine glycosylation sites follow: Asn751 and Asn846. Intrachain disulfides connect Cys824/Cys860, Cys898/Cys1295, Cys1056/Cys1101, and Cys1326/Cys1441. The segment at residues 949–952 (CGEQ) is a cross-link (isoglutamyl cysteine thioester (Cys-Gln)). N-linked (GlcNAc...) asparagine glycosylation is present at Asn968. Asn1114, Asn1285, and Asn1398 each carry an N-linked (GlcNAc...) asparagine glycan.

This sequence belongs to the protease inhibitor I39 (alpha-2-macroglobulin) family. In terms of assembly, monomer.

The protein localises to the secreted. Its function is as follows. A proteinase activates the inhibitor by specific proteolysis in the bait region, which, by an unknown mechanism leads to reaction at the cysteinyl-glutamyl internal thiol ester site and to a conformational change, whereby the proteinase is trapped and/or covalently bound to the inhibitor. While in the tetrameric proteinase inhibitors steric inhibition is sufficiently strong, monomeric forms need a covalent linkage between the activated glutamyl residue of the original thiol ester and a terminal amino group of a lysine or another nucleophilic group on the proteinase, for inhibition to be effective. The polypeptide is Murinoglobulin-2 (Rattus norvegicus (Rat)).